The primary structure comprises 468 residues: Beta-monoglucosyldiacylglycerol synthase (468 aa).

The next 4 helical transmembrane spans lie at 51–71 (AALV…VSWG), 72–92 (SIFI…VVFA), 361–381 (FMLT…MAVV), and 387–407 (MLGP…FAGL).

This sequence belongs to the glycosyltransferase 2 family. The cofactor is Mg(2+).

Its subcellular location is the membrane. The enzyme catalyses a 1,2-diacyl-sn-glycerol + UDP-alpha-D-glucose = a 1,2-diacyl-3-O-(beta-D-glucopyranosyl)-sn-glycerol + UDP + H(+). Functionally, glucosyltransferase involved in the biosynthesis of the non-bilayer-forming membrane lipid beta-monoglucosyldiacylglycerol which contributes to regulate the properties and stability of the membrane. Catalyzes the transfer of a glucosyl residue from UDP-Glc to diacylglycerol (DAG) acceptor to form the corresponding beta-glucosyl-DAG (1,2-diacyl-3-O-(beta-D-glucopyranosyl)-sn-glycerol). It can only use UDP-Glc as sugar donor. The sequence is that of Beta-monoglucosyldiacylglycerol synthase from Trichormus variabilis (strain ATCC 29413 / PCC 7937) (Anabaena variabilis).